The following is a 417-amino-acid chain: Dibenzothiophene monooxygenase (417 aa).

The interval 19–125 (DPVAVARGLA…LYTQIAQNNW (107 aa)) is helical N-terminus. Residues Y96, 129–134 (NASSEN), 159–163 (KHFCS), R282, 369–370 (AR), and H391 each bind FMN. The segment at 126 to 234 (WTGNASSENN…VEPDEVLGAP (109 aa)) is central beta-barrel N-terminus. The segment at 131-142 (SSENNSHELDVK) is lid loop. The interval 235-409 (NAFVLAFIQS…DVGKHTLNGQ (175 aa)) is helical C-terminus.

It belongs to the DszC flavin monooxygenase family. As to quaternary structure, homotetramer.

It is found in the cytoplasm. It carries out the reaction dibenzothiophene + 2 FMNH2 + 2 O2 = dibenzothiophene 5,5-dioxide + 2 FMN + 2 H2O + 2 H(+). The enzyme catalyses dibenzothiophene + FMNH2 + O2 = dibenzothiophene 5-oxide + FMN + H2O + H(+). It catalyses the reaction dibenzothiophene 5-oxide + FMNH2 + O2 = dibenzothiophene 5,5-dioxide + FMN + H2O + H(+). Its pathway is sulfur metabolism; dibenzothiophene degradation. In terms of biological role, catalyzes the first step of the '4S' desulfurization pathway that removes covalently bound sulfur from dibenzothiophene (DBT) without breaking carbon-carbon bonds. Sulfur dioxygenase which converts DBT to DBT-sulfone (DBTO2 or DBT 5,5-dioxide) in a stepwise manner. The sequence is that of Dibenzothiophene monooxygenase from Rhodococcus erythropolis (Arthrobacter picolinophilus).